We begin with the raw amino-acid sequence, 1486 residues long: Alsin homolog (1486 aa).

RCC1 repeat units follow at residues 147 to 201 (QGVV…MLVA), 256 to 307 (HTQL…ARTL), and 308 to 363 (DGRL…LLNA). MORN repeat units lie at residues 744 to 765 (CGTWRKGVLHGNCYLEYPDGSV), 766 to 784 (YCGELQHGIIEGFGKMVIP), 789 to 804 (YVGNFKGGRFHGHGVY), 817 to 832 (YEGNFCEGLFHGHGVM), 839 to 853 (YVGEYQANARSGYGV), and 863 to 884 (YMGMFADNKRSGIGSCITNRGD). The VPS9 domain maps to 1333-1486 (SRKDEMYRQN…VTSRALQKIP (154 aa)).

In the embryo, expressed in a wide range of tissues including the epidermis and the ventral nerve cord.

Has guanine nucleotide exchange factor (GEF) activity towards Rab5. Promotes the exchange of GDP to GTP, converting inactive GDP-bound Rab5 into its active GTP-bound form. This is Alsin homolog from Drosophila melanogaster (Fruit fly).